The following is a 428-amino-acid chain: Keratin, type I cytoskeletal 18-A (428 aa).

The head stretch occupies residues 2 to 78 (SSSRSVYSSS…NVNLFGGVQN (77 aa)). The interval 24-45 (SAPRFTPGSSAASVHAGAGGSG) is disordered. The tract at residues 79-114 (EKETMQDLNDRLASYLERVRSLESANKKLEVQIRQH) is coil 1A. Residues 79 to 389 (EKETMQDLND…RLLEGDSFDL (311 aa)) form the IF rod domain. The interval 115-130 (TEKKGPAKDWSPYYMT) is linker 1. Positions 131 to 222 (IEDLKKQVFN…KNHQDDVNEL (92 aa)) are coil 1B. Residues 223–246 (QAQIASSAVTVEVDAPKSQDLGKI) are linker 12. The coil 2 stretch occupies residues 247-384 (MADLRAQYDE…IQTYRRLLEG (138 aa)). A tail region spans residues 385-428 (DSFDLQDAVPVVTTQTVKKVITTTQRLVDGKVVAESNNTEVIKS).

The protein belongs to the intermediate filament family. In terms of assembly, heterotetramer of two type I and two type II keratins. Keratin-18 associates with keratin-8. Proteolytically cleaved by caspases during epithelial cell apoptosis. Expressed at high levels in notochord and low levels in adult liver.

In terms of biological role, when phosphorylated, plays a role in filament reorganization. This chain is Keratin, type I cytoskeletal 18-A (krt18-a), found in Xenopus laevis (African clawed frog).